The chain runs to 624 residues: APC membrane recruitment protein 2 (624 aa).

Disordered stretches follow at residues 1–308 (MDSH…PPSE) and 342–596 (EDVG…IPVS). Over residues 74 to 91 (SGKKEDAGGGEAQGKDAP) the composition is skewed to basic and acidic residues. A compositionally biased stretch (low complexity) spans 101–111 (SASSSVAKSHS). Composition is skewed to basic and acidic residues over residues 120–132 (GRPENGKAAENAE) and 247–258 (RRLEELCGERPD). Low complexity-rich tracts occupy residues 272–282 (ITGDIPITTIP) and 295–307 (AAAPDPSSVDPPS). Gly residues predominate over residues 406 to 416 (TGGGGGGGGGT). Positions 450-464 (NNKEEQKGREKEQHE) are enriched in basic and acidic residues. A compositionally biased stretch (polar residues) spans 535–549 (PITTTCSLKTPSSTV).

Belongs to the Amer family.

It is found in the cell membrane. In terms of biological role, negative regulator of the canonical Wnt signaling pathway involved in neuroectodermal patterning. Acts by specifically binding phosphatidylinositol 4,5-bisphosphate (PtdIns(4,5)P2), translocating to the cell membrane and interacting with key regulators of the canonical Wnt signaling pathway, such as components of the beta-catenin destruction complex. This chain is APC membrane recruitment protein 2 (AMER2), found in Gallus gallus (Chicken).